A 221-amino-acid polypeptide reads, in one-letter code: F-box protein At1g55000 (221 aa).

Positions 7–46 constitute an F-box domain; that stretch reads DTLIIIFQKLTVADLARASCVCKVWNSVATEDDLVVSAFT. The region spanning 74–118 is the LysM domain; sequence ISHRICRGDSVTSLAVKYAVQVMDIKRLNNMMSDHGIYSRDRLLI.

In terms of assembly, part of a SCF (ASK-cullin-F-box) protein ligase complex. Interacts with SKP1A/ASK1, SKP1B/ASK2, ASK4, ASK11 and ASK13.

It participates in protein modification; protein ubiquitination. In terms of biological role, component of SCF(ASK-cullin-F-box) E3 ubiquitin ligase complexes, which may mediate the ubiquitination and subsequent proteasomal degradation of target proteins. In Arabidopsis thaliana (Mouse-ear cress), this protein is F-box protein At1g55000.